Reading from the N-terminus, the 293-residue chain is Actin-related protein 2/3 complex subunit 2 (293 aa).

This sequence belongs to the ARPC2 family. Component of the Arp2/3 complex composed of arpB/Arp2, arpC/Arp3, arcA/p41-arc, arcB/p34-arc, arcC/p21-arc, arcD/p20-arc and arcE/p16-arc. Interacts with carmil (via the region between the LRR domain and COOH-terminal proline-rich domain); carmil is required for Arp2/3-dependent actin nucleation. Arp2/3 complex, MyoB, MyoC, and the alpha and beta subunits of capping protein all form a larger complex with carmil.

The protein resides in the cytoplasm. The protein localises to the cytoskeleton. It is found in the cell projection. Its subcellular location is the cytosol. It localises to the cell cortex. The protein resides in the pseudopodium. In terms of biological role, functions as a component of the Arp2/3 complex which is involved in regulation of actin polymerization and together with an activating nucleation-promoting factor (NPF) mediates the formation of branched actin networks. Seems to contact the pointed end of the daughter actin filament. The Arp2/3 complex is involved in organizing the actin system in cell motility and chemotaxis, in phagocytosis and macropinocytosis, at late steps of endosome processing, and in mitosis. In concert with a group of other proteins, the Arp2/3 complex plays a general role in the rapid activation and adaptation of the actin system to its multiple functions. This chain is Actin-related protein 2/3 complex subunit 2 (arcB), found in Dictyostelium discoideum (Social amoeba).